Here is a 764-residue protein sequence, read N- to C-terminus: Polyadenylate-binding protein, cytoplasmic and nuclear (764 aa).

The segment at 36–56 is disordered; it reads VPEAQAEGAEAAPTPTAAPHP. RRM domains are found at residues 60-138, 148-225, 241-318, and 344-462; these read ASLY…WSQR, GNIF…HHIP, TNVY…RAQK, and VNLY…LAQR. Disordered stretches follow at residues 375-420 and 587-634; these read VMRD…GDRK and GRGG…PRGN. Composition is skewed to basic and acidic residues over residues 387–399 and 408–420; these read KDEKDKENKKEGE and GSEKKTEKKGDRK. Gly residues predominate over residues 587-596; sequence GRGGPAGRGP. Residues 597-613 are compositionally biased toward low complexity; the sequence is QGIPAGIPQGLQGGPAV. Residues 657 to 734 form the PABC domain; that stretch reads GSFLQAQLAT…ALAVYDEYLK (78 aa). Over residues 735-745 the composition is skewed to polar residues; the sequence is TQGQQPTQQPA. The disordered stretch occupies residues 735–764; it reads TQGQQPTQQPAEANGEQPKAEEQKPEEQKA. The segment covering 752–764 has biased composition (basic and acidic residues); sequence PKAEEQKPEEQKA.

The protein belongs to the polyadenylate-binding protein type-1 family.

It localises to the cytoplasm. Its subcellular location is the nucleus. Functionally, binds the poly(A) tail of mRNA. Appears to be an important mediator of the multiple roles of the poly(A) tail in mRNA biogenesis, stability and translation. In the nucleus, involved in both mRNA cleavage and polyadenylation. Is also required for efficient mRNA export to the cytoplasm. Acts in concert with a poly(A)-specific nuclease (PAN) to affect poly(A) tail shortening, which may occur concomitantly with either nucleocytoplasmic mRNA transport or translational initiation. In the cytoplasm, stimulates translation initiation and regulates mRNA decay through translation termination-coupled poly(A) shortening, probably mediated by PAN. This chain is Polyadenylate-binding protein, cytoplasmic and nuclear (pabp-1), found in Neurospora crassa (strain ATCC 24698 / 74-OR23-1A / CBS 708.71 / DSM 1257 / FGSC 987).